We begin with the raw amino-acid sequence, 104 residues long: uncharacterized protein (104 aa).

This is an uncharacterized protein from Orgyia pseudotsugata (Douglas-fir tussock moth).